The primary structure comprises 142 residues: Transcription antitermination protein NusB (142 aa).

Belongs to the NusB family.

Its function is as follows. Involved in transcription antitermination. Required for transcription of ribosomal RNA (rRNA) genes. Binds specifically to the boxA antiterminator sequence of the ribosomal RNA (rrn) operons. The polypeptide is Transcription antitermination protein NusB (Streptococcus uberis (strain ATCC BAA-854 / 0140J)).